Consider the following 500-residue polypeptide: Proline/betaine transporter (500 aa).

Residues 1 to 37 (MLKRKKVKPITLRDVTIIDDGKLRKAITAASLGNAME) are Cytoplasmic-facing. Residues 38–58 (WFDFGVYGFVAYALGKVFFPG) traverse the membrane as a helical segment. The Periplasmic portion of the chain corresponds to 59 to 65 (ADPSVQM). Residues 66–86 (VAALATFSVPFLIRPLGGLFF) traverse the membrane as a helical segment. At 87–97 (GMLGDKYGRQK) the chain is on the cytoplasmic side. Residues 98–118 (ILAITIVIMSISTFCIGLIPS) form a helical membrane-spanning segment. The Periplasmic portion of the chain corresponds to 119-121 (YDT). Residues 122–142 (IGIWAPILLLICKMAQGFSVG) form a helical membrane-spanning segment. The Cytoplasmic portion of the chain corresponds to 143-169 (GEYTGASIFVAEYSPDRKRGFMGSWLD). A helical transmembrane segment spans residues 170–190 (FGSIAGFVLGAGVVVLISTIV). Topologically, residues 191–194 (GEAN) are periplasmic. A helical transmembrane segment spans residues 195 to 215 (FLDWGWRIPFFIALPLGIIGL). Topologically, residues 216-260 (YLRHALEETPAFQQHVDKLEQGDREGLQDGPKVSFKEIATKYWRS) are cytoplasmic. The chain crosses the membrane as a helical span at residues 261–281 (LLTCIGLVIATNVTYYMLLTY). The Periplasmic segment spans residues 282 to 297 (MPSYLSHNLHYSEDHG). The chain crosses the membrane as a helical span at residues 298 to 318 (VLIIIAIMIGMLFVQPVMGLL). At 319-325 (SDRFGRR) the chain is on the cytoplasmic side. Residues 326 to 346 (PFVLLGSVALFVLAIPAFILI) traverse the membrane as a helical segment. The Periplasmic segment spans residues 347–350 (NSNV). Residues 351–371 (IGLIFAGLLMLAVILNCFTGV) traverse the membrane as a helical segment. Topologically, residues 372-390 (MASTLPAMFPTHIRYSALA) are cytoplasmic. The helical transmembrane segment at 391–411 (AAFNISVLVAGLTPTLAAWLV) threads the bilayer. Residues 412–416 (ESSQN) lie on the Periplasmic side of the membrane. Residues 417 to 437 (LMMPAYYLMVVAVVGLITGVT) traverse the membrane as a helical segment. The Cytoplasmic segment spans residues 438–500 (MKETANRPLK…LVQQHPRIDE (63 aa)). Positions 453-498 (ASDIQEAKEILVEHYDNIEQKIDDIDHEIADLQAKRTRLVQQHPRI) form a coiled coil.

This sequence belongs to the major facilitator superfamily. Metabolite:H+ Symporter (MHS) family (TC 2.A.1.6) family.

The protein resides in the cell inner membrane. In terms of biological role, proton symporter that senses osmotic shifts and responds by importing osmolytes such as proline, glycine betaine, stachydrine, pipecolic acid, ectoine and taurine. It is both an osmosensor and an osmoregulator which is available to participate early in the bacterial osmoregulatory response. The chain is Proline/betaine transporter (proP) from Escherichia coli O157:H7.